The sequence spans 570 residues: Ribosome-inactivating protein SNAIf (570 aa).

A signal peptide spans 1–28 (MRVVTKLLYLVVLAICGLGIHGALTHTR). N-linked (GlcNAc...) asparagine glycosylation is found at Asn40, Asn62, and Asn140. Glu199 is an active-site residue. Asn232 carries an N-linked (GlcNAc...) asparagine glycan. Disulfide bonds link Cys284–Cys316, Cys332–Cys351, and Cys373–Cys385. Ricin B-type lectin domains follow at residues 319-439 (VEVT…WTVG) and 441-566 (VEPL…WITT). One copy of the 1-alpha repeat lies at 329 to 369 (DGLCVDVRDGHYIDGNTVQLGPCGNECNQLWTFRTDGTIRW). Residues 370–405 (LGKCLTTSSSVMIYDCNTVPPEATKWVVSTDGTITN) form a 1-beta repeat. The 1-gamma repeat unit spans residues 408–440 (SGLVLTAPQAAEGTALSLENNIHAARQGWTVGD). The 2-alpha repeat unit spans residues 452-489 (KQMCLTENGENNFVWLEDCVLNRVEQEWALYGDGTIRV). Cysteines 455 and 470 form a disulfide. Residue Asn492 is glycosylated (N-linked (GlcNAc...) asparagine). The 2-beta repeat unit spans residues 493 to 531 (RSLCVTSEDHEPSDLIVILKCEGSGNQRWVFNTNGTISN). An intrachain disulfide couples Cys496 to Cys513. Asn526 and Asn544 each carry an N-linked (GlcNAc...) asparagine glycan. A 2-gamma repeat occupies 534-567 (AKLVMDVAQSNVSLRKIILYPPTGNPNQQWITTT).

Belongs to the ribosome-inactivating protein family. Type 2 RIP subfamily. As to quaternary structure, tetramer of four pairs of disulfide bound A-B chains. Post-translationally, the precursor is processed in two chains, A and B, that are linked by a disulfide bond. A small truncated form corresponding roughly to the second ricin B-type lectin domain of the B chain, TrSNAIf, can also be produced. N-glycosylated. Expressed in fruits.

The catalysed reaction is Endohydrolysis of the N-glycosidic bond at one specific adenosine on the 28S rRNA.. Neu5Ac(alpha2-6)Gal/GalNAc specific agglutinin. Behaves as a type-2 ribosome-inactivating protein. Strongly inhibits mammalian but not plant ribosomes. The A chain is responsible for inhibiting protein synthesis through the catalytic inactivation of 60S ribosomal subunits by removing adenine from position 4,324 of 28S rRNA. The B chain binds to cell receptors and probably facilitates the entry into the cell of the A chain; B chains are also responsible for cell agglutination (lectin activity). Involved in plant defense against insects. Functionally, binds Neu5Ac(alpha2-6)Gal/GalNAc but has no clear agglutination activity. The protein is Ribosome-inactivating protein SNAIf of Sambucus nigra (European elder).